A 157-amino-acid chain; its full sequence is MEKVPMTLRGEQMLRTELERLLKLRPQISEAIAEARELGDLKENAEYHAAREEQGICEAQIRDIEYKLSVAQVIDVTKMENTGKVIFGSTVTLIDVDTDEEKTYQIVGDDEADIKAGRISVSSPIARGLIGKMEGDEVAIQTPGGAKDFEIDRVEYI.

Residues 17–37 are a coiled coil; the sequence is ELERLLKLRPQISEAIAEARE.

Belongs to the GreA/GreB family.

In terms of biological role, necessary for efficient RNA polymerase transcription elongation past template-encoded arresting sites. The arresting sites in DNA have the property of trapping a certain fraction of elongating RNA polymerases that pass through, resulting in locked ternary complexes. Cleavage of the nascent transcript by cleavage factors such as GreA or GreB allows the resumption of elongation from the new 3'terminus. GreA releases sequences of 2 to 3 nucleotides. This Vibrio parahaemolyticus serotype O3:K6 (strain RIMD 2210633) protein is Transcription elongation factor GreA.